The sequence spans 78 residues: UPF0349 protein BLi03401/BL03152 (78 aa).

The protein belongs to the UPF0349 family.

The sequence is that of UPF0349 protein BLi03401/BL03152 from Bacillus licheniformis (strain ATCC 14580 / DSM 13 / JCM 2505 / CCUG 7422 / NBRC 12200 / NCIMB 9375 / NCTC 10341 / NRRL NRS-1264 / Gibson 46).